The primary structure comprises 225 residues: Putative elongation factor 1 gamma homolog (225 aa).

In terms of domain architecture, GST C-terminal spans 94–225 (DFKTRADILR…MCETEMQPIK (132 aa)).

The sequence is that of Putative elongation factor 1 gamma homolog from Saccharomyces cerevisiae (strain ATCC 204508 / S288c) (Baker's yeast).